The sequence spans 327 residues: Biotin synthase (327 aa).

Positions 49 to 273 (FNKDKIDLCS…ICIARIALPD (225 aa)) constitute a Radical SAM core domain. Residues Cys67, Cys71, and Cys74 each contribute to the [4Fe-4S] cluster site. [2Fe-2S] cluster-binding residues include Ser110, Cys142, Cys201, and Arg277.

This sequence belongs to the radical SAM superfamily. Biotin synthase family. In terms of assembly, homodimer. [4Fe-4S] cluster is required as a cofactor. Requires [2Fe-2S] cluster as cofactor.

It catalyses the reaction (4R,5S)-dethiobiotin + (sulfur carrier)-SH + 2 reduced [2Fe-2S]-[ferredoxin] + 2 S-adenosyl-L-methionine = (sulfur carrier)-H + biotin + 2 5'-deoxyadenosine + 2 L-methionine + 2 oxidized [2Fe-2S]-[ferredoxin]. The protein operates within cofactor biosynthesis; biotin biosynthesis; biotin from 7,8-diaminononanoate: step 2/2. In terms of biological role, catalyzes the conversion of dethiobiotin (DTB) to biotin by the insertion of a sulfur atom into dethiobiotin via a radical-based mechanism. This is Biotin synthase from Methanococcus maripaludis (strain C6 / ATCC BAA-1332).